The primary structure comprises 768 residues: DNA ligase 1 (768 aa).

Residues 42–139 (VEVSQSSSDS…KEPPLESNAR (98 aa)) form a disordered region. Residues 52-99 (KNVDGRSTSEKRKVESVKLVDESKHNNHDDTGTQNVERENNIVSEAKK) show a composition bias toward basic and acidic residues. Positions 104-124 (GSSSSSSDAVSSNNDSGASTP) are enriched in low complexity. Residues 309–318 (KLRLQLAEKT) are interaction with target DNA. Position 414 (E414) interacts with ATP. The N6-AMP-lysine intermediate role is filled by K416. ATP contacts are provided by R421 and R437. Position 469 (E469) interacts with Mg(2+). An interaction with target DNA region spans residues 490–492 (KRK). Residue E568 coordinates Mg(2+). K573, R587, and K593 together coordinate ATP.

This sequence belongs to the ATP-dependent DNA ligase family. Mg(2+) is required as a cofactor.

Its subcellular location is the nucleus. The catalysed reaction is ATP + (deoxyribonucleotide)n-3'-hydroxyl + 5'-phospho-(deoxyribonucleotide)m = (deoxyribonucleotide)n+m + AMP + diphosphate.. Functionally, DNA ligase that seals nicks in double-stranded DNA during DNA replication, DNA recombination and DNA repair. This chain is DNA ligase 1 (cdc17), found in Schizosaccharomyces pombe (strain 972 / ATCC 24843) (Fission yeast).